The following is a 200-amino-acid chain: uncharacterized protein (200 aa).

A disordered region spans residues 1–21; that stretch reads MSNSAQRDARNSRDESARASD. Residues 7 to 21 are compositionally biased toward basic and acidic residues; that stretch reads RDARNSRDESARASD.

This is an uncharacterized protein from Mycobacterium tuberculosis (strain CDC 1551 / Oshkosh).